Consider the following 507-residue polypeptide: Putative histone deacetylase 2 (507 aa).

The tract at residues 29-342 is histone deacetylase; that stretch reads RNVAYYYHKD…WALETGVILG (314 aa). Residue histidine 162 is part of the active site. The interval 444-507 is disordered; that stretch reads EECFVEEDSK…RKDLNIPGIP (64 aa). Basic and acidic residues predominate over residues 482 to 501; the sequence is SHSDVIEEAKYEDRDRRKDL.

Belongs to the histone deacetylase family. HD type 1 subfamily. As to quaternary structure, may be a component of a histone deacetylase complex containing saeg-2, saeg-1 and hda-2.

Its subcellular location is the nucleus. The catalysed reaction is N(6)-acetyl-L-lysyl-[histone] + H2O = L-lysyl-[histone] + acetate. In terms of biological role, probably responsible for the deacetylation of lysine residues on the N-terminal part of the core histones (H2A, H2B, H3 and H4). Histone deacetylation gives a tag for epigenetic repression and plays an important role in transcriptional regulation, cell cycle progression and developmental events. Histone deacetylases act via the formation of large multiprotein complexes. As a likely component of a histone deacetylase complex, together with saeg-1 and hda-2, functions downstream of the cAMP-dependent kinase egl-4 to regulate the expression of genes required for egg-laying and forgaging. This chain is Putative histone deacetylase 2 (hda-2), found in Caenorhabditis elegans.